The primary structure comprises 348 residues: MGYKISIDAMGGDHGLNTTIPAALEAVKKDSNLQIVLVGDHHKIKRALDRYSKVKKIKLPVLQRIAIHHASETVGMDESPSIAVRKKKDSSMRVAINLVKDRTVDACVSAGNTGALMATSKFVLKTINGVDRPAIVYALPAFNRETKQLSKTYMLDLGANVVCTSEQLFQFAIMGSILAASSKGIAEPRVSLLNIGEEEMKGLDNIKNAAKLLQGCDFINYNGYIEGKYIFDDTTDVIVCDGFVGNVSLKTMEGSLRLIESLIKKTIQESSLLMKIPIVMALPIFKKMKKGMNLDSFNGASLLGLTGIVVKSHGGASANAFETAIYEAIKEIKYNIPKTIQESLEKVL.

It belongs to the PlsX family. Homodimer. Probably interacts with PlsY.

The protein resides in the cytoplasm. The enzyme catalyses a fatty acyl-[ACP] + phosphate = an acyl phosphate + holo-[ACP]. It participates in lipid metabolism; phospholipid metabolism. In terms of biological role, catalyzes the reversible formation of acyl-phosphate (acyl-PO(4)) from acyl-[acyl-carrier-protein] (acyl-ACP). This enzyme utilizes acyl-ACP as fatty acyl donor, but not acyl-CoA. The protein is Phosphate acyltransferase of Francisella tularensis subsp. tularensis (strain FSC 198).